The following is a 442-amino-acid chain: 3-phosphoshikimate 1-carboxyvinyltransferase (442 aa).

3-phosphoshikimate is bound by residues Lys25, Ser26, and Arg30. Residue Lys25 participates in phosphoenolpyruvate binding. Positions 96 and 124 each coordinate phosphoenolpyruvate. 3-phosphoshikimate is bound by residues Ser171, Ser172, Gln173, Ser203, Asp325, and Lys352. Gln173 is a phosphoenolpyruvate binding site. Asp325 serves as the catalytic Proton acceptor. Residues Arg356, Arg400, and Lys425 each coordinate phosphoenolpyruvate.

This sequence belongs to the EPSP synthase family. Monomer.

Its subcellular location is the cytoplasm. It catalyses the reaction 3-phosphoshikimate + phosphoenolpyruvate = 5-O-(1-carboxyvinyl)-3-phosphoshikimate + phosphate. Its pathway is metabolic intermediate biosynthesis; chorismate biosynthesis; chorismate from D-erythrose 4-phosphate and phosphoenolpyruvate: step 6/7. Catalyzes the transfer of the enolpyruvyl moiety of phosphoenolpyruvate (PEP) to the 5-hydroxyl of shikimate-3-phosphate (S3P) to produce enolpyruvyl shikimate-3-phosphate and inorganic phosphate. The polypeptide is 3-phosphoshikimate 1-carboxyvinyltransferase (Bordetella parapertussis (strain 12822 / ATCC BAA-587 / NCTC 13253)).